A 357-amino-acid chain; its full sequence is Fructose-bisphosphate aldolase (357 aa).

The substrate site is built by arginine 49 and lysine 140. The Proton acceptor role is filled by glutamate 183. Lysine 225 serves as the catalytic Schiff-base intermediate with dihydroxyacetone-P.

This sequence belongs to the class I fructose-bisphosphate aldolase family.

The enzyme catalyses beta-D-fructose 1,6-bisphosphate = D-glyceraldehyde 3-phosphate + dihydroxyacetone phosphate. The protein operates within carbohydrate degradation; glycolysis; D-glyceraldehyde 3-phosphate and glycerone phosphate from D-glucose: step 4/4. The protein is Fructose-bisphosphate aldolase (fba) of Dictyostelium discoideum (Social amoeba).